The primary structure comprises 212 residues: MKTVVLLLCLLGSAQSLPRQLSPALGAPATKPTPGQVTPLTQQQPNQVFPSISLIPLTQLLTLGSDLPLFNPATMPHGTQTLPFTLGPLNGQQQLQPQMLPIIVAQLGAQGALLSSEELPLASQIFTGLLIHPLFPGAIQPSGQTGAKPDVQNGALPTRQAGASPANQATTPGHTTPAVTDDDDYEMSTPAGLQRATHTTEGTTMDPPNRTK.

A signal peptide spans 1 to 16; that stretch reads MKTVVLLLCLLGSAQS. 2 disordered regions span residues 23-42 and 141-212; these read PALG…PLTQ and PSGQ…NRTK. Polar residues-rich tracts occupy residues 33–42 and 165–178; these read TPGQVTPLTQ and PANQ…TTPA.

It belongs to the amelotin family. O-glycosylated. Post-translationally, phosphorylated by FAM20C in vitro. As to expression, highest expression in the mandible. Found in the basal lamina of maturation stage ameloblasts of incisors and unerupted molars. Also found in the internal basal lamina of junctional epithelium in molars.

The protein resides in the secreted. Its function is as follows. Is a promoter of calcium phosphate mineralization, playing a critical role in the formation of the compact, mineralized, aprismatic enamel surface layer during the maturation stage of amelogenesis. The polypeptide is Amelotin (Rattus norvegicus (Rat)).